Here is a 191-residue protein sequence, read N- to C-terminus: Dephospho-CoA kinase (191 aa).

Residues 3-191 form the DPCK domain; the sequence is AIGITGSYAS…NLIANLECRV (189 aa). 11–16 lines the ATP pocket; the sequence is ASGKTF.

The protein belongs to the CoaE family.

Its subcellular location is the cytoplasm. It catalyses the reaction 3'-dephospho-CoA + ATP = ADP + CoA + H(+). It participates in cofactor biosynthesis; coenzyme A biosynthesis; CoA from (R)-pantothenate: step 5/5. Its function is as follows. Catalyzes the phosphorylation of the 3'-hydroxyl group of dephosphocoenzyme A to form coenzyme A. This Rickettsia bellii (strain RML369-C) protein is Dephospho-CoA kinase.